The primary structure comprises 118 residues: Neutral phospholipase A2 homolog taipoxin beta chain 2 (118 aa).

7 disulfide bridges follow: Cys-11/Cys-71, Cys-27/Cys-117, Cys-29/Cys-45, Cys-44/Cys-98, Cys-51/Cys-91, Cys-60/Cys-84, and Cys-78/Cys-89.

It belongs to the phospholipase A2 family. Group I subfamily. D49 sub-subfamily. Heterotrimer of alpha, beta, and gamma chains; non-covalently linked. Expressed by the venom gland.

It is found in the secreted. Heterotrimer: Snake venom phospholipase A2 (PLA2) heterotrimer that acts as a potent presynaptic neurotoxin by blocking synaptic transmission and synaptic vesicle recycling. May act by binding in a calcium-dependent fashion to neurotonal pentraxin-1 (NPTX1) and neurotonal pentraxin-2 (NPTX2), but not to neuronal pentraxin receptor (NPTXR). Also binds to taipoxin-associated calcium binding protein 49 (RCN2), a protein localized in the lumen of endoplasmic reticulum. Its function is as follows. Monomer (beta chain): Snake venom phospholipase A2 homolog that is neither toxic nor enzymatically active. Does not bind calcium. The protein is Neutral phospholipase A2 homolog taipoxin beta chain 2 of Oxyuranus scutellatus scutellatus (Australian taipan).